Consider the following 121-residue polypeptide: Thioredoxin-like protein (121 aa).

Residues V2 to G112 enclose the Thioredoxin domain. A disulfide bridge links C30 with C33.

This sequence belongs to the thioredoxin family.

In terms of biological role, participates in various redox reactions through the reversible oxidation of its active center dithiol to a disulfide and catalyzes dithiol-disulfide exchange reactions. In Fusarium culmorum, this protein is Thioredoxin-like protein.